A 199-amino-acid polypeptide reads, in one-letter code: Proteasome subunit beta type-2-B (199 aa).

M1 carries the post-translational modification N-acetylmethionine.

The protein belongs to the peptidase T1B family. In terms of assembly, component of the 20S core complex of the 26S proteasome. The 26S proteasome is composed of a core protease (CP), known as the 20S proteasome, capped at one or both ends by the 19S regulatory particle (RP/PA700). The 20S proteasome core is composed of 28 subunits that are arranged in four stacked rings, resulting in a barrel-shaped structure. The two end rings are each formed by seven alpha subunits, and the two central rings are each formed by seven beta subunits. The catalytic chamber with the active sites is on the inside of the barrel. As to expression, ubiquitous low levels, higher expression in siliques and flowers.

The protein resides in the cytoplasm. Its subcellular location is the nucleus. Its function is as follows. Non-catalytic component of the proteasome, a multicatalytic proteinase complex which is characterized by its ability to cleave peptides with Arg, Phe, Tyr, Leu, and Glu adjacent to the leaving group at neutral or slightly basic pH. The proteasome has an ATP-dependent proteolytic activity. This is Proteasome subunit beta type-2-B (PBD2) from Arabidopsis thaliana (Mouse-ear cress).